We begin with the raw amino-acid sequence, 464 residues long: Secretion-regulating guanine nucleotide exchange factor (464 aa).

RCC1 repeat units follow at residues 14–66, 68–118, 119–170, 172–229, 230–282, 283–349, and 350–401; these read AAAL…VVTD, GSLF…ILTE, NGQV…AATA, GTVF…SLTD, AGEL…AQTV, TGKV…LAVI, and GGVC…ALCQ. The span at 301-313 shows a compositional bias: basic and acidic residues; it reads VETREGWESEKQD. The tract at residues 301–323 is disordered; it reads VETREGWESEKQDPSLPGSGPQK. The segment at 411–464 is disordered; that stretch reads HPSVTSPSPDATKEARSQEAMEQERNQKERHAETSPQAQSDRFRNGGLVAETLE. Over residues 421–443 the composition is skewed to basic and acidic residues; the sequence is ATKEARSQEAMEQERNQKERHAE. The residue at position 427 (S427) is a Phosphoserine.

As to quaternary structure, interacts with SEC5. The interaction occurs only in the presence of magnesium or manganese and is stimulated by dCTP or GTP.

It localises to the cytoplasm. The protein resides in the nucleus. In terms of biological role, probable guanine nucleotide exchange factor (GEF), which may be involved in the secretion process. In Bos taurus (Bovine), this protein is Secretion-regulating guanine nucleotide exchange factor (SERGEF).